The chain runs to 397 residues: Decapping and exoribonuclease protein (397 aa).

Residues 1-10 show a composition bias toward basic residues; the sequence is MEPRGTKRKA. The tract at residues 1–30 is disordered; that stretch reads MEPRGTKRKAEKTEVEKPLNKLPRAVPSLR. Substrate-binding positions include arginine 58, glutamate 101, and 131–133; that span reads WRG. Methionine 185 contacts adenosine 3',5'-bisphosphate. Position 192 (glutamate 192) interacts with Mg(2+). Residues cysteine 217 and glutamate 234 each coordinate substrate. 4 residues coordinate Mg(2+): glutamate 234, aspartate 236, glutamate 253, and leucine 254. Aspartate 236 contributes to the adenosine 3',5'-bisphosphate binding site. Residues 253–256 are adenosine 3',5'-bisphosphate; inhibitor; it reads ELKT. Residues lysine 255 and glutamine 280 each coordinate substrate. Glutamine 280 contacts adenosine 3',5'-bisphosphate. Threonine 392 is subject to Phosphothreonine. A Phosphoserine modification is found at serine 394.

It belongs to the DXO/Dom3Z family. Mg(2+) is required as a cofactor.

It is found in the nucleus. It carries out the reaction a 5'-end triphospho-ribonucleoside in mRNA + H2O = a 5'-end phospho-ribonucleoside in mRNA + diphosphate + H(+). It catalyses the reaction a 5'-end NAD(+)-phospho-ribonucleoside in mRNA + H2O = a 5'-end phospho-ribonucleoside in mRNA + NAD(+) + H(+). The catalysed reaction is a 5'-end NAD(+)-phospho-ribonucleoside in snoRNA + H2O = a 5'-end phospho-ribonucleoside in snoRNA + NAD(+) + H(+). The enzyme catalyses a 5'-end (N(7)-methyl 5'-triphosphoguanosine)-ribonucleoside-ribonucleotide in mRNA + H2O = a (N(7)-methyl 5'-triphosphoguanosine)-nucleoside + a 5'-end phospho-ribonucleoside in mRNA + H(+). It carries out the reaction a 5'-end FAD-phospho-ribonucleoside in mRNA + H2O = a 5'-end phospho-ribonucleoside in mRNA + FAD + H(+). It catalyses the reaction a 5'-end CoA-ribonucleoside in mRNA + H2O = 3'-dephospho-CoA + a 5'-end phospho-ribonucleoside in mRNA + H(+). Its activity is regulated as follows. The 5'-3' exoribonuclease activity is inhibited by adenosine 3',5'-bisphosphate. Functionally, decapping enzyme for NAD-capped RNAs: specifically hydrolyzes the nicotinamide adenine dinucleotide (NAD) cap from a subset of RNAs by removing the entire NAD moiety from the 5'-end of an NAD-capped RNA. The NAD-cap is present at the 5'-end of some RNAs and snoRNAs. In contrast to the canonical 5'-end N7 methylguanosine (m7G) cap, the NAD cap promotes mRNA decay. Preferentially acts on NAD-capped transcripts in response to environmental stress. Also acts as a non-canonical decapping enzyme that removes the entire cap structure of m7G capped or incompletely capped RNAs and mediates their subsequent degradation. Specifically degrades pre-mRNAs with a defective 5'-end m7G cap and is part of a pre-mRNA capping quality control. Has decapping activity toward incomplete 5'-end m7G cap mRNAs such as unmethylated 5'-end-capped RNA (cap0), while it has no activity toward 2'-O-ribose methylated m7G cap (cap1). In contrast to canonical decapping enzymes DCP2 and NUDT16, which cleave the cap within the triphosphate linkage, the decapping activity releases the entire cap structure GpppN and a 5'-end monophosphate RNA. Also has 5'-3' exoribonuclease activities: The 5'-end monophosphate RNA is then degraded by the 5'-3' exoribonuclease activity, enabling this enzyme to decap and degrade incompletely capped mRNAs. Also possesses RNA 5'-pyrophosphohydrolase activity by hydrolyzing the 5'-end triphosphate to release pyrophosphates. Exhibits decapping activity towards FAD-capped RNAs. Exhibits decapping activity towards dpCoA-capped RNAs in vitro. The protein is Decapping and exoribonuclease protein of Mus musculus (Mouse).